A 290-amino-acid polypeptide reads, in one-letter code: MLRKYEAMFILDQDTQDVNALSSRMIEIISKDGKVIEKNDLGLIEFAYKINHKKKGHYFVVIVEATAEAIKEFERIANIEKNVVRTLIINTENEQGYEQSVQLSKTDMTKFEEERKAKRDFKKPFVKKEFNKPTEKRTFEKPAEVTVEVKEVVVEEVKQTVKPAKKVAEAKVEEVSHEEAHDFVSKMEAKYKAHLAETVEEHVEEVEVEEAKTTAKKPAAPKMSAAERAKVDGSHNIDEERYELQKYSNKLRSVAIEKNLPKKLQEVNLRDLTKKELIEYMRKVRAALAK.

The disordered stretch occupies residues 208 to 233 (VEEAKTTAKKPAAPKMSAAERAKVDG).

It belongs to the bacterial ribosomal protein bS6 family.

Binds together with bS18 to 16S ribosomal RNA. This is Small ribosomal subunit protein bS6 from Mesoplasma florum (strain ATCC 33453 / NBRC 100688 / NCTC 11704 / L1) (Acholeplasma florum).